Consider the following 225-residue polypeptide: Transcriptional regulatory protein AfsQ1 (225 aa).

The 114-residue stretch at serine 3 to leucine 116 folds into the Response regulatory domain. Aspartate 52 is modified (4-aspartylphosphate). A DNA-binding region (ompR/PhoB-type) is located at residues threonine 124–proline 223.

Post-translationally, phosphorylated by AfsQ2.

It is found in the cytoplasm. It localises to the nucleoid. In terms of biological role, forms part of a two-component regulatory system AfsQ1/AfsQ2 involved in secondary metabolism. The chain is Transcriptional regulatory protein AfsQ1 from Streptomyces coelicolor (strain ATCC BAA-471 / A3(2) / M145).